We begin with the raw amino-acid sequence, 194 residues long: Mitochondrial import inner membrane translocase subunit Tim22 (194 aa).

Cystine bridges form between C69/C141 and C160/C179. Helical transmembrane passes span 74–94 (ALACVGGFVLGGAFGVFTAGI), 123–143 (MSYAKNFAIVGAMFSCTECLI), and 170–190 (AGLKAGAIGCGGFAAFSAAID).

This sequence belongs to the Tim17/Tim22/Tim23 family. In terms of assembly, component of the TIM22 complex, whose core is composed of TIMM22, associated with peripheral protein FXC1/TIMM10B and the 70 kDa heterohexamer. In most cases, the 70 kDa complex is composed of TIMM9 and TIMM10 (TIMM10A or TIMM10B). A small fraction of the 70 kDa complex is composed of TIMM8 (TIMM8A/DDP1 or TIMM8B/DDP2) and TIMM13. The TIM22 complex also contains AGK and TIMM29. Interacts directly with TIMM9, TIMM10A and FXC1/TIMM10B. Interacts (when oxidized) with TIMM29; interaction is direct. Post-translationally, disulfide bonds promote efficient assembly of the TIM22 complex.

The protein resides in the mitochondrion inner membrane. Its function is as follows. Essential core component of the TIM22 complex, a complex that mediates the import and insertion of multi-pass transmembrane proteins into the mitochondrial inner membrane. In the TIM22 complex, it constitutes the voltage-activated and signal-gated channel. Forms a twin-pore translocase that uses the membrane potential as external driving force in 2 voltage-dependent steps. This is Mitochondrial import inner membrane translocase subunit Tim22 (TIMM22) from Homo sapiens (Human).